Reading from the N-terminus, the 505-residue chain is Cytochrome P450 52C1 (505 aa).

The chain crosses the membrane as a helical span at residues 4–21 (LFCFLAGIIVVYKAAQYY). Cysteine 453 is a heme binding site.

This sequence belongs to the cytochrome P450 family. Requires heme as cofactor.

The protein resides in the membrane. Its function is as follows. Together with an NADPH cytochrome P450 the enzyme system catalyzes the terminal hydroxylation as the first step in the assimilation of alkanes and fatty acids. This is Cytochrome P450 52C1 (CYP52C1) from Candida tropicalis (Yeast).